Here is a 556-residue protein sequence, read N- to C-terminus: mRNA-capping enzyme subunit beta (556 aa).

2 disordered regions span residues 1–28 (MKPS…DNNV) and 56–217 (LPPV…QKTS). A compositionally biased stretch (polar residues) spans 63-74 (VSTSDTGNTSHT). The segment covering 85-96 (ESDETDTDDEPG) has biased composition (acidic residues). 2 stretches are compositionally biased toward basic and acidic residues: residues 103-131 (TKFR…KDKQ) and 139-212 (IQLD…KDIF).

This sequence belongs to the fungal TPase family. As to quaternary structure, heterodimer. The mRNA-capping enzyme is composed of two separate chains alpha and beta, respectively a mRNA guanylyltransferase and an mRNA 5'-triphosphate monophosphatase. The cofactor is Mg(2+).

The protein resides in the nucleus. It carries out the reaction a 5'-end triphospho-ribonucleoside in mRNA + H2O = a 5'-end diphospho-ribonucleoside in mRNA + phosphate + H(+). Functionally, first step of mRNA capping. Converts the 5'-triphosphate end of a nascent mRNA chain into a diphosphate end. The protein is mRNA-capping enzyme subunit beta (CET1) of Kluyveromyces lactis (strain ATCC 8585 / CBS 2359 / DSM 70799 / NBRC 1267 / NRRL Y-1140 / WM37) (Yeast).